Consider the following 81-residue polypeptide: Sec-independent protein translocase protein TatA (81 aa).

Residues 1 to 21 (MGGLQPWHWVIVIAVFVLLFG) form a helical membrane-spanning segment. A compositionally biased stretch (basic and acidic residues) spans 46 to 56 (MQAESKGDEPK). Positions 46-81 (MQAESKGDEPKPATPIASERVDTTAPEQQSTDRHTA) are disordered.

This sequence belongs to the TatA/E family. In terms of assembly, the Tat system comprises two distinct complexes: a TatABC complex, containing multiple copies of TatA, TatB and TatC subunits, and a separate TatA complex, containing only TatA subunits. Substrates initially bind to the TatABC complex, which probably triggers association of the separate TatA complex to form the active translocon.

The protein resides in the cell membrane. Part of the twin-arginine translocation (Tat) system that transports large folded proteins containing a characteristic twin-arginine motif in their signal peptide across membranes. TatA could form the protein-conducting channel of the Tat system. This is Sec-independent protein translocase protein TatA from Mycolicibacterium smegmatis (strain ATCC 700084 / mc(2)155) (Mycobacterium smegmatis).